Consider the following 291-residue polypeptide: MMTQSIRRSMLTVMATLPLLFSSATLHAQANSVQQQLEALEKSSGGRLGVALINTADNSQILYRADERFAMCSTSKVMAAAAVLKQSESDKHLLNQRVEIKKSDLVNYNPIAEKHVNGTMTLAELGAAALQYSDNTAMNKLIAHLGGPDKVTAFARSLGDETFRLDRTEPTLNTAIPGDPRDTTTPLAMAQTLKNLTLGKALAETQRAQLVTWLKGNTTGSASIRAGLPKSWVVGDKTGSGDYGTTNDIAVIWPENHAPLVLVTYFTQPEQKAERRRDILAAAAKIVTHGF.

The first 29 residues, 1–29, serve as a signal peptide directing secretion; that stretch reads MMTQSIRRSMLTVMATLPLLFSSATLHAQ. The Acyl-ester intermediate role is filled by Ser73. 237-239 is a binding site for substrate; that stretch reads KTG.

It belongs to the class-A beta-lactamase family. As to quaternary structure, monomer.

It catalyses the reaction a beta-lactam + H2O = a substituted beta-amino acid. Functionally, has strong cefotaxime-hydrolyzing activity. In Escherichia coli, this protein is Beta-lactamase Toho-1 (bla).